The following is a 213-amino-acid chain: Thymidylate kinase (213 aa).

11–18 (GGEGAGKT) is a binding site for ATP.

It belongs to the thymidylate kinase family.

The catalysed reaction is dTMP + ATP = dTDP + ADP. Its function is as follows. Phosphorylation of dTMP to form dTDP in both de novo and salvage pathways of dTTP synthesis. The chain is Thymidylate kinase from Shouchella clausii (strain KSM-K16) (Alkalihalobacillus clausii).